A 621-amino-acid chain; its full sequence is tRNA uridine 5-carboxymethylaminomethyl modification enzyme MnmG (621 aa).

9–14 (GGGHAG) is a binding site for FAD. 268–282 (GPRYCPSIEDKINRF) contributes to the NAD(+) binding site.

The protein belongs to the MnmG family. As to quaternary structure, homodimer. Heterotetramer of two MnmE and two MnmG subunits. FAD serves as cofactor.

It is found in the cytoplasm. In terms of biological role, NAD-binding protein involved in the addition of a carboxymethylaminomethyl (cmnm) group at the wobble position (U34) of certain tRNAs, forming tRNA-cmnm(5)s(2)U34. This chain is tRNA uridine 5-carboxymethylaminomethyl modification enzyme MnmG, found in Campylobacter fetus subsp. fetus (strain 82-40).